Consider the following 310-residue polypeptide: Protoheme IX farnesyltransferase (310 aa).

The next 9 helical transmembrane spans lie at 21–43 (LLKP…VAPV), 48–70 (MIAL…LNMW), 95–115 (GEAL…LGLA), 118–138 (LFAA…YSMW), 147–167 (IVIG…VATG), 174–194 (LFMF…LALF), 220–240 (VLVY…TGIG), 243–263 (LYLA…VRIW), and 289–309 (LFLH…GLGG).

This sequence belongs to the UbiA prenyltransferase family. Protoheme IX farnesyltransferase subfamily. Interacts with CtaA.

Its subcellular location is the cell inner membrane. It catalyses the reaction heme b + (2E,6E)-farnesyl diphosphate + H2O = Fe(II)-heme o + diphosphate. It participates in porphyrin-containing compound metabolism; heme O biosynthesis; heme O from protoheme: step 1/1. In terms of biological role, converts heme B (protoheme IX) to heme O by substitution of the vinyl group on carbon 2 of heme B porphyrin ring with a hydroxyethyl farnesyl side group. This Cereibacter sphaeroides (strain KD131 / KCTC 12085) (Rhodobacter sphaeroides) protein is Protoheme IX farnesyltransferase.